Consider the following 339-residue polypeptide: Large ribosomal subunit protein uL29 (339 aa).

Residues 1 to 96 (MNDLTKKSVE…FAKQRKAKIE (96 aa)) form a large ribosomal subunit protein uL29 region. The segment at 97–339 (QMMAEQQAAE…KTTKKGTGKK (243 aa)) is unknown. Disordered stretches follow at residues 129-254 (VVST…VPTK) and 311-339 (KENRDKILTASKTTKKADDKTTKKGTGKK). Over residues 145–156 (APVAAKKPAAAK) the composition is skewed to low complexity. Basic and acidic residues predominate over residues 157–170 (DFPKQKDVVEEKTA). The segment covering 171–182 (TGKPAAPSAKKA) has biased composition (low complexity). Over residues 185–210 (AKKDVAQETKTDKDAALKALIKEKAA) the composition is skewed to basic and acidic residues. The segment covering 217 to 238 (KSKTSTPSGKTTVTVKSVTSAK) has biased composition (low complexity). Positions 239 to 248 (ADIEVPKETS) are enriched in basic and acidic residues.

This sequence belongs to the universal ribosomal protein uL29 family. Forms homomultimers. Part of the ribosome; radioactive IRS binds to purified ribosomes.

In terms of biological role, specifically binds a DNA inverted repeat sequence (IRS) found downstream of rpsB in one of the ribosomal subunit operons (for genes rpsB, tsf, and unknown gene x). Might be involved in regulation of transcription of the rpsB operon; the IRS may be a control element to attenuate transcription. The sequence is that of Large ribosomal subunit protein uL29 from Spiroplasma citri.